The following is a 273-amino-acid chain: XIAP-associated factor 1 (273 aa).

The TRAF-type zinc-finger motif lies at 22–80 (LHEAHCLRFIVLCPECEEPIPESKMKEHMEVVHQQTKESQQHPAKCKFCELAVQLSNLD). The interval 181–228 (GNRRSTVSKDVRPKTKNRNSSTKRETKKQNGTVALPLKSGLQQRADLP) is disordered.

Interacts with BIRC1, BIRC2, BIRC3, BIRC4, BIRC7 and BIRC8. Part of an complex consisting of BIRC4, XAF1 and BIRC5; the complex formation requires IFN-beta stimulation. Interacts with RNF114, the interaction increases XAF1 stability and proapoptotic effects, and may regulate IFN signaling.

The protein resides in the cytoplasm. The protein localises to the nucleus. Its subcellular location is the mitochondrion. Functionally, seems to function as a negative regulator of members of the IAP (inhibitor of apoptosis protein) family. Inhibits anti-caspase activity of BIRC4. Induces cleavage and inactivation of BIRC4 independent of caspase activation. Mediates TNF-alpha-induced apoptosis and is involved in apoptosis in trophoblast cells. May inhibit BIRC4 indirectly by activating the mitochondrial apoptosis pathway. After translocation to mitochondria, promotes translocation of BAX to mitochondria and cytochrome c release from mitochondria. Seems to promote the redistribution of BIRC4 from the cytoplasm to the nucleus, probably independent of BIRC4 inactivation which seems to occur in the cytoplasm. The BIRC4-XAF1 complex mediates down-regulation of BIRC5/survivin; the process requires the E3 ligase activity of BIRC4. Seems to be involved in cellular sensitivity to the proapoptotic actions of TRAIL. May be a tumor suppressor by mediating apoptosis resistance of cancer cells. The chain is XIAP-associated factor 1 (Xaf1) from Mus musculus (Mouse).